Here is a 386-residue protein sequence, read N- to C-terminus: Succinate--CoA ligase [ADP-forming] subunit beta (386 aa).

ATP contacts are provided by residues lysine 46, 53-55, glutamate 99, alanine 102, and glutamate 107; that span reads GRG. Mg(2+) contacts are provided by asparagine 199 and aspartate 213. Substrate-binding positions include asparagine 264 and 321-323; that span reads GIV.

This sequence belongs to the succinate/malate CoA ligase beta subunit family. Heterotetramer of two alpha and two beta subunits. Requires Mg(2+) as cofactor.

It carries out the reaction succinate + ATP + CoA = succinyl-CoA + ADP + phosphate. The enzyme catalyses GTP + succinate + CoA = succinyl-CoA + GDP + phosphate. It participates in carbohydrate metabolism; tricarboxylic acid cycle; succinate from succinyl-CoA (ligase route): step 1/1. Its function is as follows. Succinyl-CoA synthetase functions in the citric acid cycle (TCA), coupling the hydrolysis of succinyl-CoA to the synthesis of either ATP or GTP and thus represents the only step of substrate-level phosphorylation in the TCA. The beta subunit provides nucleotide specificity of the enzyme and binds the substrate succinate, while the binding sites for coenzyme A and phosphate are found in the alpha subunit. The polypeptide is Succinate--CoA ligase [ADP-forming] subunit beta (Actinobacillus succinogenes (strain ATCC 55618 / DSM 22257 / CCUG 43843 / 130Z)).